A 96-amino-acid chain; its full sequence is Large ribosomal subunit protein bL21 (96 aa).

It belongs to the bacterial ribosomal protein bL21 family. In terms of assembly, part of the 50S ribosomal subunit. Contacts protein L20.

Its function is as follows. This protein binds to 23S rRNA in the presence of protein L20. This chain is Large ribosomal subunit protein bL21, found in Chlorobium chlorochromatii (strain CaD3).